Consider the following 518-residue polypeptide: 2,3-bisphosphoglycerate-independent phosphoglycerate mutase (518 aa).

Asp-14 and Ser-64 together coordinate Mn(2+). Ser-64 functions as the Phosphoserine intermediate in the catalytic mechanism. Residues His-125, 155-156 (RD), Arg-187, Arg-193, 264-267 (RPDR), and Lys-337 contribute to the substrate site. Mn(2+) is bound by residues Asp-404, His-408, Asp-445, His-446, and His-467.

It belongs to the BPG-independent phosphoglycerate mutase family. The cofactor is Mn(2+).

The enzyme catalyses (2R)-2-phosphoglycerate = (2R)-3-phosphoglycerate. It functions in the pathway carbohydrate degradation; glycolysis; pyruvate from D-glyceraldehyde 3-phosphate: step 3/5. In terms of biological role, catalyzes the interconversion of 2-phosphoglycerate and 3-phosphoglycerate. The polypeptide is 2,3-bisphosphoglycerate-independent phosphoglycerate mutase (Methanococcoides burtonii (strain DSM 6242 / NBRC 107633 / OCM 468 / ACE-M)).